The sequence spans 795 residues: uncharacterized protein (795 aa).

Residues 228–280 (NIICFKNKCKNNEKEKKEEEEDHDHDHDDKKKEKEDKEKEEEEEEEDSNDDFE) adopt a coiled-coil conformation. Disordered regions lie at residues 242–278 (EKKE…SNDD), 326–430 (TTTT…TPNR), 455–484 (INQQ…KSEP), and 673–743 (NNNN…NENE). Over residues 251–264 (DHDHDDKKKEKEDK) the composition is skewed to basic and acidic residues. A compositionally biased stretch (acidic residues) spans 265–278 (EKEEEEEEEDSNDD). Over residues 326-345 (TTTTTVNGSKNSSNTTTPIT) the composition is skewed to low complexity. A compositionally biased stretch (acidic residues) spans 362 to 373 (DDDDDDDLTDED). Positions 377-398 (HNEIYSTSPKVSHSTFCQSSPT) are enriched in polar residues. Low complexity-rich tracts occupy residues 399 to 414 (LLDL…QQQQ), 455 to 480 (INQQ…SSNI), and 673 to 729 (NNNN…NQNE). A compositionally biased stretch (basic and acidic residues) spans 732-743 (NENKNENENENE).

This is an uncharacterized protein from Dictyostelium discoideum (Social amoeba).